Here is a 2231-residue protein sequence, read N- to C-terminus: Helicase SEN1 (2231 aa).

A compositionally biased stretch (low complexity) spans 1–17 (MNSNNPDNNNSNNINNN). 2 disordered regions span residues 1 to 24 (MNSNNPDNNNSNNINNNNKDKDIA) and 1032 to 1061 (HPPSAPAFHTKSRGLSNKNDDSSSEESDND). ATP is bound by residues Gln-1339 and 1360–1364 (GTGKT). The segment at 1491–1511 (ELRGKLDSESGNPESPMSTED) is disordered. Residues 1499 to 1510 (ESGNPESPMSTE) show a composition bias toward polar residues. ATP contacts are provided by Gln-1619, Tyr-1655, and Glu-1787. Disordered regions lie at residues 1894-1993 (ITQG…AVVG) and 2032-2231 (QLGL…KPRS). Positions 1909–1927 (KRRVVDEGEEADKAVKKKK) match the Nuclear localization signal motif. Residues 1923-1937 (VKKKKKEKKKEKKKS) are compositionally biased toward basic residues. Residues 1938–1950 (KADDKKKNNKKAE) show a composition bias toward basic and acidic residues. A compositionally biased stretch (acidic residues) spans 2048–2058 (NNEDDDDEDDY). 2 stretches are compositionally biased toward polar residues: residues 2060 to 2088 (PSISDSSLMKSEANGRNNRVASHNQNFSA) and 2095 to 2104 (QVSQAKQTQV). A compositionally biased stretch (low complexity) spans 2114–2123 (SNSVLSGGSS). A compositionally biased stretch (polar residues) spans 2134–2160 (PNQNGQNGANRTLSQHVGNANQYSTAP). Low complexity predominate over residues 2210–2220 (RNSSRRNASSS).

Belongs to the DNA2/NAM7 helicase family. As to quaternary structure, interacts with RAD2, RNT1 and RPB1. Binds to multiple snoRNAs.

The protein localises to the nucleus. In terms of biological role, ATP-dependent 5'-&gt;3' DNA/RNA helicase required for the expression and maturation of diverse classes of non-protein-coding RNAs like precursor tRNAs, rRNAs and small nuclear (snRNA) and nucleolar (snoRNA) RNAs. Directs RNA polymerase II transcription termination on snoRNAs as well as on several short protein-coding genes. May also play a role in transcription-coupled nucleotide excision repair. This chain is Helicase SEN1 (SEN1), found in Saccharomyces cerevisiae (strain ATCC 204508 / S288c) (Baker's yeast).